The following is a 253-amino-acid chain: Probable proteasome subunit alpha type-7 (253 aa).

Serine 104 is subject to Phosphoserine.

The protein belongs to the peptidase T1A family. The 26S proteasome consists of a 20S proteasome core and two 19S regulatory subunits. The 20S proteasome core is composed of 28 subunits that are arranged in four stacked rings, resulting in a barrel-shaped structure. The two end rings are each formed by seven alpha subunits, and the two central rings are each formed by seven beta subunits. The catalytic chamber with the active sites is on the inside of the barrel.

It is found in the cytoplasm. The protein localises to the nucleus. In terms of biological role, the proteasome is a multicatalytic proteinase complex which is characterized by its ability to cleave peptides with Arg, Phe, Tyr, Leu, and Glu adjacent to the leaving group at neutral or slightly basic pH. The proteasome has an ATP-dependent proteolytic activity. This Schizosaccharomyces pombe (strain 972 / ATCC 24843) (Fission yeast) protein is Probable proteasome subunit alpha type-7 (pre10).